Here is a 211-residue protein sequence, read N- to C-terminus: Prolactin (211 aa).

The signal sequence occupies residues 1 to 24 (MTHRRTKLFMMAAVVSYVMTSCGA). 2 cysteine pairs are disulfide-bonded: Cys70–Cys184 and Cys201–Cys211.

Belongs to the somatotropin/prolactin family.

It is found in the secreted. The protein is Prolactin (prl) of Paralichthys olivaceus (Bastard halibut).